We begin with the raw amino-acid sequence, 1012 residues long: Multiple C2 domain and transmembrane region protein 10 (1012 aa).

The 115-residue stretch at 1–115 (MTEAKTGTGN…REGESVVQLY (115 aa)) folds into the C2 1 domain. Residues 141–203 (ENGENVRRVN…SQQNGQGQRM (63 aa)) form a disordered region. The segment covering 148–160 (RVNRSGGSKKSKK) has biased composition (basic residues). Composition is skewed to low complexity over residues 161-180 (VQNVSSSMAIQQQQQQQQQQ) and 188-202 (RGNQQQSQQNGQGQR). C2 domains lie at 262 to 376 (SSHK…PQWY), 411 to 551 (KAGN…SRWF), and 585 to 710 (YNSD…THSY). Ca(2+) is bound by residues Glu-296, Glu-344, Asn-346, and Glu-349. A run of 3 helical transmembrane segments spans residues 810–830 (FFRLVNVISGLVAVAKLVEVM), 841–861 (VFVLAFLFMVLFPELLLPCLL), and 952–972 (ATFLFLMFCLLAAVGFYTVPV).

This sequence belongs to the MCTP family. It depends on Ca(2+) as a cofactor. In terms of tissue distribution, highly expressed in roots meristems, shoot apical meristems (SAMs) and in incipient leaf primordia. Observed in flowers.

The protein localises to the endoplasmic reticulum membrane. In terms of biological role, may function as a signaling molecule by regulating the trafficking of other regulators. The polypeptide is Multiple C2 domain and transmembrane region protein 10 (Arabidopsis thaliana (Mouse-ear cress)).